The sequence spans 166 residues: Small ribosomal subunit protein uS5 (166 aa).

Residues 11–74 (LQEKLIAVNR…EKARRNMINV (64 aa)) form the S5 DRBM domain.

This sequence belongs to the universal ribosomal protein uS5 family. In terms of assembly, part of the 30S ribosomal subunit. Contacts proteins S4 and S8.

With S4 and S12 plays an important role in translational accuracy. Functionally, located at the back of the 30S subunit body where it stabilizes the conformation of the head with respect to the body. In Actinobacillus succinogenes (strain ATCC 55618 / DSM 22257 / CCUG 43843 / 130Z), this protein is Small ribosomal subunit protein uS5.